Here is a 435-residue protein sequence, read N- to C-terminus: GTPase Der (435 aa).

2 EngA-type G domains span residues 3–168 and 176–351; these read PLVA…PDET and IKLA…QNRQ. Residues 9-16, 56-60, 120-123, 182-189, 229-233, and 294-297 each bind GTP; these read GRPNVGKS, DTGGY, NKVE, DTAGL, and NKWD. Residues 352 to 435 enclose the KH-like domain; that stretch reads KKISTSELNR…VPVSFRYRKK (84 aa).

The protein belongs to the TRAFAC class TrmE-Era-EngA-EngB-Septin-like GTPase superfamily. EngA (Der) GTPase family. Associates with the 50S ribosomal subunit.

In terms of biological role, GTPase that plays an essential role in the late steps of ribosome biogenesis. In Chlorobium phaeobacteroides (strain BS1), this protein is GTPase Der.